A 424-amino-acid polypeptide reads, in one-letter code: MARKKIREYDSKRLLKEHLKRLANIDLQIRSAQVTESTDFTELTNQESWLSSTKLVVKPDMLFGKRGKSGLVALKLDLAEVADFVKARLGTEVEMEGCKAPITTFIVEPFVPHDQEYYLSIVSDRLGCTISFSECGGIEIEENWDKVKTIFLPAEKSMTLEVCAPLIATLPLEVRAKIGNFIMGAFAVFQDLDFSFMEMNPFTLVDGEPFPLDMRGELDDTAAFKNFNKWGDIEFPLPFGRVLSSTENFIHGLDEKTSASLKFTVLNPKGRIWTMVAGGGASVIYADTVGDLGYASELGNYAEYSGAPNEEEVLQYARVVIDCATTDPDGRKRALLIGGGIANFTDVAATFNGIIRALREKETRLKASRMHIYVRRGGPNYQTGLARMRALGEELGVPLEVYGPEATMTGICKRAIDCIMLPDA.

Citrate contacts are provided by asparagine 343, threonine 345, and arginine 376.

The protein belongs to the succinate/malate CoA ligase beta subunit family. Heterooctamer of 4 alpha and 4 beta chains.

It is found in the cytoplasm. The protein resides in the cytosol. It carries out the reaction oxaloacetate + acetyl-CoA + ADP + phosphate = citrate + ATP + CoA. Functionally, ATP citrate-lyase is the primary enzyme responsible for the synthesis of cytosolic acetyl-CoA, used for the elongation of fatty acids and biosynthesis of isoprenoids, flavonoids and malonated derivatives. May supply substrate to the cytosolic acetyl-CoA carboxylase, which generates the malonyl-CoA used for the synthesis of a multitude of compounds, including very long chain fatty acids and flavonoids. Required for normal growth and development and elongation of C18 fatty acids to C20 to C24 fatty acids in seeds. In contrast to all known animal ACL enzymes having a homomeric structure, plant ACLs are composed of alpha and beta chains. This Arabidopsis thaliana (Mouse-ear cress) protein is ATP-citrate synthase alpha chain protein 3 (ACLA-3).